A 509-amino-acid polypeptide reads, in one-letter code: Maturase K (509 aa).

This sequence belongs to the intron maturase 2 family. MatK subfamily.

The protein resides in the plastid. Its subcellular location is the chloroplast. In terms of biological role, usually encoded in the trnK tRNA gene intron. Probably assists in splicing its own and other chloroplast group II introns. This Vachellia farnesiana (Sweet acacia) protein is Maturase K.